We begin with the raw amino-acid sequence, 257 residues long: Zinc transporter ZupT (257 aa).

8 consecutive transmembrane segments (helical) span residues leucine 5 to glycine 25, valine 32 to methionine 52, glycine 61 to leucine 81, alanine 109 to valine 129, leucine 137 to alanine 157, isoleucine 171 to isoleucine 191, leucine 195 to leucine 215, and glycine 236 to isoleucine 256. Asparagine 120 and glutamate 123 together coordinate Fe(2+). Residues glutamate 123 and histidine 148 each coordinate Zn(2+). Residues asparagine 149, glutamate 152, and glutamate 181 each contribute to the Fe(2+) site. Glutamate 152 lines the Zn(2+) pocket.

This sequence belongs to the ZIP transporter (TC 2.A.5) family. ZupT subfamily.

It localises to the cell inner membrane. It carries out the reaction Zn(2+)(in) = Zn(2+)(out). In terms of biological role, mediates zinc uptake. May also transport other divalent cations. This chain is Zinc transporter ZupT, found in Salmonella agona (strain SL483).